We begin with the raw amino-acid sequence, 426 residues long: Serine--tRNA ligase (426 aa).

233-235 (TAE) lines the L-serine pocket. 264–266 (RSE) is a binding site for ATP. Residue Glu287 coordinates L-serine. Position 351–354 (351–354 (EISS)) interacts with ATP. Residue Ser385 participates in L-serine binding.

This sequence belongs to the class-II aminoacyl-tRNA synthetase family. Type-1 seryl-tRNA synthetase subfamily. In terms of assembly, homodimer. The tRNA molecule binds across the dimer.

Its subcellular location is the cytoplasm. The enzyme catalyses tRNA(Ser) + L-serine + ATP = L-seryl-tRNA(Ser) + AMP + diphosphate + H(+). It carries out the reaction tRNA(Sec) + L-serine + ATP = L-seryl-tRNA(Sec) + AMP + diphosphate + H(+). It participates in aminoacyl-tRNA biosynthesis; selenocysteinyl-tRNA(Sec) biosynthesis; L-seryl-tRNA(Sec) from L-serine and tRNA(Sec): step 1/1. In terms of biological role, catalyzes the attachment of serine to tRNA(Ser). Is also able to aminoacylate tRNA(Sec) with serine, to form the misacylated tRNA L-seryl-tRNA(Sec), which will be further converted into selenocysteinyl-tRNA(Sec). The polypeptide is Serine--tRNA ligase (Brachyspira hyodysenteriae (strain ATCC 49526 / WA1)).